The chain runs to 832 residues: MSAADKVKPAASPASEDPSAIAGNISYHAQYSPHFSPLAFGPEQAFYATAESVRDHLLQRWNDTYLHFHKTDPKQTYYLSMEYLQGRALTNAVGNLAITGAYADALKKFGYELEAIAGQERDAALGNGGLGRLASCFLDSMATLNLPSWGYGLRYRYGLFKQRIAKEGQEEIAEDWLDKFSPWEIVRHDVVYPIRFFGHVEISPDGKRKWAGGEVLNALAYDVPIPGYKTKNAISLRLWDATATAEDFNLFQFNDGQYESAAQLHSRAQQICAVLYPGDATEEGKLLRLKQQYFLCSASLQDIIFRFKERKADRVSGKWSEFPSKVAVQMNDTHPTLAIPELMRLLMDVEGLGWDEAWAVTNKTVAYTNHTVLPEALEKWSQAVMKKLLPRHMEIIEEIDKRFREMVISTRKDMEGKIESMRVLDNNPEKPVVRMANLCVVAGHTVNGVAELHSNILKQELFADYVSIWPNKFQNKTNGITPRRWLRFCNPELSEIVTKWLKTDQWTSNLDLLTGLRKFADDEKLHAEWAAAKLASKKRLAKHVLDVTGVTIDPDSLFDIQIKRIHEYKRQLMNILGAVYRYKKLKEMSAADRQKVTPRTVMVGGKAFATYTNAKRIVKLVNDVGAVVNNDADVNKYLKVVFIPNYNVSVAEVLIPGSELSQHISTAGMEASGTSNMKFSLNGCVIIGTLDGANVEIREEVGQDNFFLFGAKADQVAGLRKDRENGLFKPDPRFEEAKQFIRSGAFGTYDYTPLLDSLEGNTGFGRGDYFLVGYDFPSYIDAQARVDEAYKDKKKWVKMSILNTAGSGKFSSDRTIDQYAKEIWGISACPVP.

Lysine 678 carries the post-translational modification N6-(pyridoxal phosphate)lysine.

It belongs to the glycogen phosphorylase family. The cofactor is pyridoxal 5'-phosphate.

Its subcellular location is the cytoplasm. It carries out the reaction [(1-&gt;4)-alpha-D-glucosyl](n) + phosphate = [(1-&gt;4)-alpha-D-glucosyl](n-1) + alpha-D-glucose 1-phosphate. Its function is as follows. Phosphorylase is an important allosteric enzyme in carbohydrate metabolism. Enzymes from different sources differ in their regulatory mechanisms and in their natural substrates. However, all known phosphorylases share catalytic and structural properties. The polypeptide is Alpha-glucan phosphorylase, H isozyme (Triticum aestivum (Wheat)).